The following is a 377-amino-acid chain: Polar flagellin F (377 aa).

2 coiled-coil regions span residues 98 to 131 (QSANGSNSQVERTALQEEVTALNDELNRIAETTS) and 302 to 339 (DSQRAELGAYQNRFNHAINNLDNIHENLAASNSRIQDT).

This sequence belongs to the bacterial flagellin family. As to quaternary structure, heteromer of multiple flagellin subunits including FlaA, FlaB/D, FlaC, FlaE and FlaF.

It is found in the secreted. The protein resides in the bacterial flagellum. Its function is as follows. Flagellin is the subunit protein which polymerizes to form the filaments of bacterial flagella. This chain is Polar flagellin F (flaF), found in Vibrio parahaemolyticus serotype O3:K6 (strain RIMD 2210633).